A 294-amino-acid polypeptide reads, in one-letter code: Bifunctional protein FolD (294 aa).

Residues 166–168 (GRS), Ser191, and Ile232 each bind NADP(+).

Belongs to the tetrahydrofolate dehydrogenase/cyclohydrolase family. Homodimer.

It catalyses the reaction (6R)-5,10-methylene-5,6,7,8-tetrahydrofolate + NADP(+) = (6R)-5,10-methenyltetrahydrofolate + NADPH. The enzyme catalyses (6R)-5,10-methenyltetrahydrofolate + H2O = (6R)-10-formyltetrahydrofolate + H(+). It functions in the pathway one-carbon metabolism; tetrahydrofolate interconversion. Catalyzes the oxidation of 5,10-methylenetetrahydrofolate to 5,10-methenyltetrahydrofolate and then the hydrolysis of 5,10-methenyltetrahydrofolate to 10-formyltetrahydrofolate. The chain is Bifunctional protein FolD from Bradyrhizobium sp. (strain ORS 278).